We begin with the raw amino-acid sequence, 309 residues long: Isethionate sulfite-lyase activating enzyme (309 aa).

Residues 22-309 (HDGPGIRTVV…VVAAEHATDG (288 aa)) form the Radical SAM core domain. Residues Cys36, Cys40, Cys43, Cys62, Cys68, Cys71, Cys75, Cys95, Cys98, Cys102, and Cys106 each coordinate [4Fe-4S] cluster. 42–44 (WCS) contacts S-adenosyl-L-methionine. 4Fe-4S ferredoxin-type domains lie at 53–85 (IELAYNTGRCLTLTKCVRCVEVCTMNAITRADD) and 86–117 (DTISIDRALCEECGMFCAEACPSKALITYGTT). S-adenosyl-L-methionine is bound by residues Gly146, 195–197 (DIK), and His268.

Belongs to the organic radical-activating enzymes family. Monomer. [4Fe-4S] cluster serves as cofactor.

The catalysed reaction is glycyl-[protein] + reduced [flavodoxin] + S-adenosyl-L-methionine = glycin-2-yl radical-[protein] + semiquinone [flavodoxin] + 5'-deoxyadenosine + L-methionine + H(+). It participates in organosulfur degradation; alkanesulfonate degradation. Involved in an anaerobic respiration pathway that converts the sulfonate isethionate (2-hydroxyethanesulfonate) to ammonia, acetate and sulfide. Catalyzes activation of the isethionate sulfite-lyase IslA under anaerobic conditions by generation of an organic free radical on a glycine residue, via a homolytic cleavage of S-adenosyl-L-methionine (SAM). This Oleidesulfovibrio alaskensis (strain ATCC BAA-1058 / DSM 17464 / G20) (Desulfovibrio alaskensis) protein is Isethionate sulfite-lyase activating enzyme.